The following is a 449-amino-acid chain: Tubulin alpha-8 chain (449 aa).

The MREC motif motif lies at 1–4 (MREC). 8 residues coordinate GTP: Gln-11, Glu-71, Ser-140, Gly-144, Thr-145, Thr-179, Asn-206, and Asn-228. Glu-71 lines the Mg(2+) pocket. Glu-254 is a catalytic residue.

The protein belongs to the tubulin family. Dimer of alpha and beta chains. A typical microtubule is a hollow water-filled tube with an outer diameter of 25 nm and an inner diameter of 15 nM. Alpha-beta heterodimers associate head-to-tail to form protofilaments running lengthwise along the microtubule wall with the beta-tubulin subunit facing the microtubule plus end conferring a structural polarity. Microtubules usually have 13 protofilaments but different protofilament numbers can be found in some organisms and specialized cells. It depends on Mg(2+) as a cofactor. Post-translationally, some glutamate residues at the C-terminus are polyglycylated, resulting in polyglycine chains on the gamma-carboxyl group. Glycylation is mainly limited to tubulin incorporated into axonemes (cilia and flagella) whereas glutamylation is prevalent in neuronal cells, centrioles, axonemes, and the mitotic spindle. Both modifications can coexist on the same protein on adjacent residues, and lowering polyglycylation levels increases polyglutamylation, and reciprocally. Cilia and flagella glycylation is required for their stability and maintenance. Flagella glycylation controls sperm motility. In terms of processing, some glutamate residues at the C-terminus are polyglutamylated, resulting in polyglutamate chains on the gamma-carboxyl group. Polyglutamylation plays a key role in microtubule severing by spastin (SPAST). SPAST preferentially recognizes and acts on microtubules decorated with short polyglutamate tails: severing activity by SPAST increases as the number of glutamates per tubulin rises from one to eight, but decreases beyond this glutamylation threshold. Glutamylation is also involved in cilia motility. The C-terminal phenylalanine residue is cleaved by MATCAP1/KIAA0895L.

The protein localises to the cytoplasm. The protein resides in the cytoskeleton. The enzyme catalyses GTP + H2O = GDP + phosphate + H(+). In terms of biological role, tubulin is the major constituent of microtubules, a cylinder consisting of laterally associated linear protofilaments composed of alpha- and beta-tubulin heterodimers. Microtubules grow by the addition of GTP-tubulin dimers to the microtubule end, where a stabilizing cap forms. Below the cap, tubulin dimers are in GDP-bound state, owing to GTPase activity of alpha-tubulin. This Bos taurus (Bovine) protein is Tubulin alpha-8 chain (TUBA8).